A 349-amino-acid chain; its full sequence is ATPase GET3 (349 aa).

26 to 33 (KGGVGKTT) lines the ATP pocket. Residue aspartate 57 is part of the active site. Positions 242 and 269 each coordinate ATP. Positions 281 and 284 each coordinate Zn(2+).

This sequence belongs to the arsA ATPase family. As to quaternary structure, homodimer. Component of the Golgi to ER traffic (GET) complex, which is composed of GET1, GET2 and GET3. Within the complex, GET1 and GET2 form a heterotetramer which is stabilized by phosphatidylinositol binding and which binds to the GET3 homodimer. Interacts with the chloride channel protein GEF1.

The protein resides in the cytoplasm. Its subcellular location is the endoplasmic reticulum. It is found in the golgi apparatus. Its function is as follows. ATPase required for the post-translational delivery of tail-anchored (TA) proteins to the endoplasmic reticulum. Recognizes and selectively binds the transmembrane domain of TA proteins in the cytosol. This complex then targets to the endoplasmic reticulum by membrane-bound receptors GET1 and GET2, where the tail-anchored protein is released for insertion. This process is regulated by ATP binding and hydrolysis. ATP binding drives the homodimer towards the closed dimer state, facilitating recognition of newly synthesized TA membrane proteins. ATP hydrolysis is required for insertion. Subsequently, the homodimer reverts towards the open dimer state, lowering its affinity for the GET1-GET2 receptor, and returning it to the cytosol to initiate a new round of targeting. Cooperates with the HDEL receptor ERD2 to mediate the ATP-dependent retrieval of resident ER proteins that contain a C-terminal H-D-E-L retention signal from the Golgi to the ER. Involved in low-level resistance to the oxyanions arsenite and arsenate, and in heat tolerance. The polypeptide is ATPase GET3 (Candida tropicalis (strain ATCC MYA-3404 / T1) (Yeast)).